We begin with the raw amino-acid sequence, 314 residues long: Ribosomal protein L11 methyltransferase (314 aa).

S-adenosyl-L-methionine is bound by residues T163, G184, D206, and N248.

The protein belongs to the methyltransferase superfamily. PrmA family.

The protein localises to the cytoplasm. The catalysed reaction is L-lysyl-[protein] + 3 S-adenosyl-L-methionine = N(6),N(6),N(6)-trimethyl-L-lysyl-[protein] + 3 S-adenosyl-L-homocysteine + 3 H(+). Methylates ribosomal protein L11. The sequence is that of Ribosomal protein L11 methyltransferase from Lactobacillus delbrueckii subsp. bulgaricus (strain ATCC 11842 / DSM 20081 / BCRC 10696 / JCM 1002 / NBRC 13953 / NCIMB 11778 / NCTC 12712 / WDCM 00102 / Lb 14).